A 266-amino-acid chain; its full sequence is Glucosamine-6-phosphate deaminase (266 aa).

Asp-72 functions as the Proton acceptor; for enolization step in the catalytic mechanism. Catalysis depends on Asp-141, which acts as the For ring-opening step. His-143 (proton acceptor; for ring-opening step) is an active-site residue. Glu-148 acts as the For ring-opening step in catalysis.

The protein belongs to the glucosamine/galactosamine-6-phosphate isomerase family. NagB subfamily. Homohexamer.

The enzyme catalyses alpha-D-glucosamine 6-phosphate + H2O = beta-D-fructose 6-phosphate + NH4(+). It participates in amino-sugar metabolism; N-acetylneuraminate degradation; D-fructose 6-phosphate from N-acetylneuraminate: step 5/5. Allosterically activated by N-acetylglucosamine 6-phosphate (GlcNAc6P). Its function is as follows. Catalyzes the reversible isomerization-deamination of glucosamine 6-phosphate (GlcN6P) to form fructose 6-phosphate (Fru6P) and ammonium ion. The polypeptide is Glucosamine-6-phosphate deaminase (Yersinia pseudotuberculosis serotype O:1b (strain IP 31758)).